A 109-amino-acid polypeptide reads, in one-letter code: Urocortin-2 (109 aa).

A signal peptide spans 1–22; that stretch reads MTRWALVVFMVLMLDRVPGTPI. Residues 23-67 constitute a propeptide that is removed on maturation; the sequence is PTFQLLPQNYPETTPSSVSSESPSDTTTGPSASWSNSKASPYLDT. Residues 24-60 are disordered; it reads TFQLLPQNYPETTPSSVSSESPSDTTTGPSASWSNSK. The segment covering 33–50 has biased composition (low complexity); that stretch reads PETTPSSVSSESPSDTTT. The segment covering 51–60 has biased composition (polar residues); the sequence is GPSASWSNSK. Position 106 is a valine amide; partial (valine 106).

This sequence belongs to the sauvagine/corticotropin-releasing factor/urotensin I family. In terms of assembly, binds with high affinity to CRF receptors 2-alpha and 2-beta. Glycosylated.

It localises to the secreted. Functionally, suppresses food intake, delays gastric emptying and decreases heat-induced edema. Might represent an endogenous ligand for maintaining homeostasis after stress. The polypeptide is Urocortin-2 (Ucn2) (Rattus norvegicus (Rat)).